The primary structure comprises 326 residues: Beta-ketoacyl-[acyl-carrier-protein] synthase III (326 aa).

Active-site residues include Cys-116 and His-253. Residues 254 to 258 form an ACP-binding region; that stretch reads QANIR. The active site involves Asn-283.

The protein belongs to the thiolase-like superfamily. FabH family. Homodimer.

It localises to the cytoplasm. It carries out the reaction malonyl-[ACP] + acetyl-CoA + H(+) = 3-oxobutanoyl-[ACP] + CO2 + CoA. Its pathway is lipid metabolism; fatty acid biosynthesis. Functionally, catalyzes the condensation reaction of fatty acid synthesis by the addition to an acyl acceptor of two carbons from malonyl-ACP. Catalyzes the first condensation reaction which initiates fatty acid synthesis and may therefore play a role in governing the total rate of fatty acid production. Possesses both acetoacetyl-ACP synthase and acetyl transacylase activities. Its substrate specificity determines the biosynthesis of branched-chain and/or straight-chain of fatty acids. This Jannaschia sp. (strain CCS1) protein is Beta-ketoacyl-[acyl-carrier-protein] synthase III.